Consider the following 52-residue polypeptide: Teratocyte protein CftICK-I (52 aa).

Residues 1 to 19 (MYKLCILFLVVIFAVMAIA) form the signal peptide. 3 cysteine pairs are disulfide-bonded: cysteine 22–cysteine 37, cysteine 29–cysteine 41, and cysteine 36–cysteine 51.

As to expression, abundantly expressed by teratocytes, which are extra-embryonic cells released by parasitoid wasps into their hosts during larval eclosion.

It localises to the secreted. In terms of biological role, this endoparasitoid wasp peptide has immununosuppressive, antimicrobial and insecticidal activities. Suppress cellular immunity which is detectable as a reduction of hemocyte encapsulation in the host. Shows potent antifungal activity against C.albicans (MIC~0.25 ug/ml). In vivo, ingestion of this peptide (probably at excessive doses) increases larval mortality and reduces leaf consumption of D.saccharalis, a permissive host for C.flavipes. The protein is Teratocyte protein CftICK-I of Cotesia flavipes (Parasitic wasp).